A 156-amino-acid polypeptide reads, in one-letter code: MTITDLVLILFIAALLAYALYDQFIMPRRNGPTLLSIALLRRGRVDSVIFVGLVAILIYNNVTSHGAQMTTWLLSALALMGFYIFWIRTPRIIFKQRGFFFANVWIEYNRIKEMNLSEDGVLVMQLEQRRLLIRVRNIDDLEKIYKLLIENQYLKI.

At 1–5 the chain is on the periplasmic side; it reads MTITD. The chain crosses the membrane as a helical span at residues 6 to 26; it reads LVLILFIAALLAYALYDQFIM. The Cytoplasmic portion of the chain corresponds to 27–44; that stretch reads PRRNGPTLLSIALLRRGR. The chain crosses the membrane as a helical span at residues 45–65; it reads VDSVIFVGLVAILIYNNVTSH. A topological domain (periplasmic) is located at residue G66. Residues 67–87 traverse the membrane as a helical segment; that stretch reads AQMTTWLLSALALMGFYIFWI. Residues 88-156 are Cytoplasmic-facing; the sequence is RTPRIIFKQR…LLIENQYLKI (69 aa).

This sequence belongs to the UPF0266 family.

The protein resides in the cell inner membrane. The chain is UPF0266 membrane protein YobD (yobD) from Salmonella typhimurium (strain LT2 / SGSC1412 / ATCC 700720).